The chain runs to 66 residues: Large ribosomal subunit protein bL35 (66 aa).

Belongs to the bacterial ribosomal protein bL35 family.

This chain is Large ribosomal subunit protein bL35, found in Ruegeria pomeroyi (strain ATCC 700808 / DSM 15171 / DSS-3) (Silicibacter pomeroyi).